A 478-amino-acid polypeptide reads, in one-letter code: Serine hydroxymethyltransferase, cytosolic (478 aa).

N6-(pyridoxal phosphate)lysine is present on Lys251.

It belongs to the SHMT family. As to quaternary structure, homotetramer. Identified in complex with FAM175B and the other subunits of the BRISC complex, at least composed of FAM175B/ABRO1, BRCC3/BRCC36, BABAM2 and BABAM1/NBA1. Pyridoxal 5'-phosphate serves as cofactor.

It is found in the cytoplasm. It carries out the reaction (6R)-5,10-methylene-5,6,7,8-tetrahydrofolate + glycine + H2O = (6S)-5,6,7,8-tetrahydrofolate + L-serine. Its pathway is one-carbon metabolism; tetrahydrofolate interconversion. Interconversion of serine and glycine. This Mus musculus (Mouse) protein is Serine hydroxymethyltransferase, cytosolic (Shmt1).